Consider the following 481-residue polypeptide: Calcium uptake protein 1, mitochondrial (481 aa).

Residues 1 to 33 (MFRLHSLSALAELAVGSRCYHGGSQPTQMKRRL) constitute a mitochondrion transit peptide. A disordered region spans residues 58–82 (ESPPSVNNPKSELGDKGKNKDEGEV). The segment covering 69–82 (ELGDKGKNKDEGEV) has biased composition (basic and acidic residues). A polybasic region region spans residues 101 to 112 (KKKKRSGFRDRK). Serine 124 is subject to Phosphoserine. The k/R-ring stretch occupies residues 128–131 (KIFR). The EF-hand 1 domain occupies 220-255 (TPQRNFEIAFKMFDLNGDGEVDMEEFEQASCPGNII). Ca(2+) contacts are provided by aspartate 233, asparagine 235, aspartate 237, glutamate 239, and glutamate 244. A k/R-ring region spans residues 264–268 (RHRDR). The 36-residue stretch at 413–448 (LSDHVCDVVFALFDCDGNGELSNKEFVSIMKQRLMR) folds into the EF-hand 2 domain. Ca(2+)-binding residues include aspartate 426, aspartate 428, asparagine 430, glutamate 432, and glutamate 437. An Asymmetric dimethylarginine modification is found at arginine 460. Residues 460 to 470 (RLMQAMWKCAQ) form a C-helix region region.

It belongs to the MICU1 family. MICU1 subfamily. As to quaternary structure, heterodimer; disulfide-linked; heterodimerizes with MICU2 or MICU3. Homodimer; disulfide-linked. Component of the uniplex complex, composed of MCU, EMRE/SMDT1, MICU1 and MICU2 (or MICU3) in a 4:4:1:1 stoichiometry. The composition of calcium sensors within the uniplex complex can differ depending on tissues: a MICU1 homodimer can be present instead of the MICU1-MICU2 heterodimer in skeletal-muscle and kidney. MICU1 is recruited to the uniplex complex by EMRE/SMDT1, and it associates with MCU at low calcium levels, occluding the pore of the MCU channel. Associates with the MICOS complex. Interacts with SLC25A23. Interacts with CHCHD4/MIA40; which introduces the interchain disulfide bond with MICU2. Interacts (when methylated) with UCP2; leading to decrease the calcium sensitivity of MICU1. In terms of processing, phosphorylation at Ser-124 by AKT1 impairs its maturation and stability. Asymmetric dimethylation at Arg-460 by PRMT1 decreases the calcium sensitivity of MICU1 by promoting interaction with UCP2. Post-translationally, degraded by YME1L1 when not complexed as homodimer or heterodimer. Not degraded when complexed as homodimer or heterodimer; the presence of the interchain disulfide bond protecting MICU1 from degradation by YME1L1.

Its subcellular location is the mitochondrion intermembrane space. The protein localises to the mitochondrion inner membrane. Calcium sensor of the mitochondrial calcium uniporter (MCU) channel, which senses calcium level via its EF-hand domains. MICU1 and MICU2 (or MICU3) form a disulfide-linked heterodimer that stimulates and inhibits MCU activity, depending on the concentration of calcium. At low calcium levels, MICU1 occludes the pore of the MCU channel, preventing mitochondrial calcium uptake. At higher calcium levels, calcium-binding to MICU1 and MICU2 (or MICU3) induces a conformational change that weakens MCU-MICU1 interactions and moves the MICU1-MICU2 heterodimer away from the pore, allowing calcium permeation through the MCU channel. Also required to protect against manganese toxicity by preventing manganese uptake by MCU: mechanistically, manganese-binding to its EF-hand domains does not induce any conformational change, maintaining MCU pore occlusion. Acts as a regulator of mitochondrial cristae structure independently of its ability to regulate the mitochondrial calcium uniporter channel. Regulates glucose-dependent insulin secretion in pancreatic beta-cells by regulating mitochondrial calcium uptake. Induces T-helper 1-mediated autoreactivity, which is accompanied by the release of IFNG. In Ailuropoda melanoleuca (Giant panda), this protein is Calcium uptake protein 1, mitochondrial (MICU1).